The primary structure comprises 79 residues: Putative Fis-like DNA-binding protein (79 aa).

A DNA-binding region (H-T-H motif) is located at residues 55-74; it reads QSKASVMLGLNRNTLRKKLI.

It belongs to the transcriptional regulatory Fis family.

This Neisseria meningitidis serogroup A / serotype 4A (strain DSM 15465 / Z2491) protein is Putative Fis-like DNA-binding protein.